Reading from the N-terminus, the 291-residue chain is Formamidopyrimidine-DNA glycosylase (291 aa).

Proline 2 acts as the Schiff-base intermediate with DNA in catalysis. Catalysis depends on glutamate 3, which acts as the Proton donor. Catalysis depends on lysine 58, which acts as the Proton donor; for beta-elimination activity. Positions 104, 127, and 172 each coordinate DNA. Residues 257–291 (FVYDRAGLPCRACGTPIRQIVQGQRSTFCCPTCQR) form an FPG-type zinc finger. Arginine 281 acts as the Proton donor; for delta-elimination activity in catalysis.

This sequence belongs to the FPG family. As to quaternary structure, monomer. Requires Zn(2+) as cofactor.

It catalyses the reaction Hydrolysis of DNA containing ring-opened 7-methylguanine residues, releasing 2,6-diamino-4-hydroxy-5-(N-methyl)formamidopyrimidine.. The catalysed reaction is 2'-deoxyribonucleotide-(2'-deoxyribose 5'-phosphate)-2'-deoxyribonucleotide-DNA = a 3'-end 2'-deoxyribonucleotide-(2,3-dehydro-2,3-deoxyribose 5'-phosphate)-DNA + a 5'-end 5'-phospho-2'-deoxyribonucleoside-DNA + H(+). In terms of biological role, involved in base excision repair of DNA damaged by oxidation or by mutagenic agents. Acts as a DNA glycosylase that recognizes and removes damaged bases. Has a preference for oxidized purines, such as 7,8-dihydro-8-oxoguanine (8-oxoG). Has AP (apurinic/apyrimidinic) lyase activity and introduces nicks in the DNA strand. Cleaves the DNA backbone by beta-delta elimination to generate a single-strand break at the site of the removed base with both 3'- and 5'-phosphates. The sequence is that of Formamidopyrimidine-DNA glycosylase from Ralstonia pickettii (strain 12J).